A 346-amino-acid polypeptide reads, in one-letter code: Probable dual-specificity RNA methyltransferase RlmN (346 aa).

E92 functions as the Proton acceptor in the catalytic mechanism. Residues 98–332 (TDQRLTVCVS…VSLRASRGLD (235 aa)) form the Radical SAM core domain. A disulfide bridge connects residues C105 and C337. C112, C116, and C119 together coordinate [4Fe-4S] cluster. Residues 159–160 (GE), S189, 218–220 (SLH), and N294 contribute to the S-adenosyl-L-methionine site. The S-methylcysteine intermediate role is filled by C337.

This sequence belongs to the radical SAM superfamily. RlmN family. Requires [4Fe-4S] cluster as cofactor.

It localises to the cytoplasm. It carries out the reaction adenosine(2503) in 23S rRNA + 2 reduced [2Fe-2S]-[ferredoxin] + 2 S-adenosyl-L-methionine = 2-methyladenosine(2503) in 23S rRNA + 5'-deoxyadenosine + L-methionine + 2 oxidized [2Fe-2S]-[ferredoxin] + S-adenosyl-L-homocysteine. The enzyme catalyses adenosine(37) in tRNA + 2 reduced [2Fe-2S]-[ferredoxin] + 2 S-adenosyl-L-methionine = 2-methyladenosine(37) in tRNA + 5'-deoxyadenosine + L-methionine + 2 oxidized [2Fe-2S]-[ferredoxin] + S-adenosyl-L-homocysteine. Functionally, specifically methylates position 2 of adenine 2503 in 23S rRNA and position 2 of adenine 37 in tRNAs. In Synechococcus sp. (strain CC9311), this protein is Probable dual-specificity RNA methyltransferase RlmN.